A 126-amino-acid chain; its full sequence is Non-specific lipid-transfer protein 13 (126 aa).

The N-terminal stretch at 1–20 is a signal peptide; the sequence is MDTHTTKLVAISLLLLLVIS. Disulfide bonds link cysteine 36–cysteine 85, cysteine 46–cysteine 61, cysteine 62–cysteine 109, and cysteine 83–cysteine 123.

The protein belongs to the plant LTP family.

Functionally, plant non-specific lipid-transfer proteins transfer phospholipids as well as galactolipids across membranes. May play a role in wax or cutin deposition in the cell walls of expanding epidermal cells and certain secretory tissues. The sequence is that of Non-specific lipid-transfer protein 13 (LTP13) from Arabidopsis thaliana (Mouse-ear cress).